Here is a 330-residue protein sequence, read N- to C-terminus: MRFKGLDLNLLVALDALITERNLSSAARKINLSQPAMSAAVARLRKHFRDELFGMRGRELVLSSRAEGLAAPVREALMHIELSIMARHPFDPARLNRRFRIVLSDFVTVVLFRNVVARVTREAPAVSFELAAPTDEHELLLRRGEVDFVIRPDFFMSSTHPRAALFEERLVCVGCCTNRELQPRLTFDRYMSMGHVAVKHGGAPRTPVEHSFLTDLGPTRRIDILVQSFSMIPPLIVGTNRIGTMPLGLVRHFQRTMPLRIVELPHPFPAFTEAVQWPSLHNSDPGSLWMRDILFQEATRMATTQELRVTSSPEDAEPPGHFVRSVSPLP.

An HTH lysR-type domain is found at 6–63; the sequence is LDLNLLVALDALITERNLSSAARKINLSQPAMSAAVARLRKHFRDELFGMRGRELVLS. Residues 23 to 42 constitute a DNA-binding region (H-T-H motif); that stretch reads LSSAARKINLSQPAMSAAVA. The tract at residues 308–330 is disordered; the sequence is RVTSSPEDAEPPGHFVRSVSPLP.

Belongs to the LysR transcriptional regulatory family.

Its function is as follows. NodD regulates the expression of the nodABCFE genes which encode other nodulation proteins. NodD is also a negative regulator of its own expression. Binds flavonoids as inducers. This chain is Nodulation protein D 2 (nodD2), found in Bradyrhizobium diazoefficiens (strain JCM 10833 / BCRC 13528 / IAM 13628 / NBRC 14792 / USDA 110).